The primary structure comprises 481 residues: ATP synthase subunit beta, chloroplastic (481 aa).

Residue 161–168 (GGAGVGKT) participates in ATP binding.

The protein belongs to the ATPase alpha/beta chains family. F-type ATPases have 2 components, CF(1) - the catalytic core - and CF(0) - the membrane proton channel. CF(1) has five subunits: alpha(3), beta(3), gamma(1), delta(1), epsilon(1). CF(0) has four main subunits: a(1), b(1), b'(1) and c(9-12).

Its subcellular location is the plastid. The protein localises to the chloroplast thylakoid membrane. The enzyme catalyses ATP + H2O + 4 H(+)(in) = ADP + phosphate + 5 H(+)(out). Functionally, produces ATP from ADP in the presence of a proton gradient across the membrane. The catalytic sites are hosted primarily by the beta subunits. The polypeptide is ATP synthase subunit beta, chloroplastic (Dictyota dichotoma).